Reading from the N-terminus, the 465-residue chain is Ribulose bisphosphate carboxylase large chain (465 aa).

Lys-4 is modified (N6,N6,N6-trimethyllysine). Substrate-binding residues include Asn-113 and Thr-163. The active-site Proton acceptor is Lys-165. Lys-167 contributes to the substrate binding site. Mg(2+) contacts are provided by Lys-191, Asp-193, and Glu-194. Residue Lys-191 is modified to N6-carboxylysine. The Proton acceptor role is filled by His-284. Substrate is bound by residues Arg-285, His-317, and Ser-369.

The protein belongs to the RuBisCO large chain family. Type I subfamily. As to quaternary structure, heterohexadecamer of 8 large chains and 8 small chains; disulfide-linked. The disulfide link is formed within the large subunit homodimers. Mg(2+) serves as cofactor. Post-translationally, the disulfide bond which can form in the large chain dimeric partners within the hexadecamer appears to be associated with oxidative stress and protein turnover.

The protein localises to the plastid. The protein resides in the chloroplast. It carries out the reaction 2 (2R)-3-phosphoglycerate + 2 H(+) = D-ribulose 1,5-bisphosphate + CO2 + H2O. The catalysed reaction is D-ribulose 1,5-bisphosphate + O2 = 2-phosphoglycolate + (2R)-3-phosphoglycerate + 2 H(+). In terms of biological role, ruBisCO catalyzes two reactions: the carboxylation of D-ribulose 1,5-bisphosphate, the primary event in carbon dioxide fixation, as well as the oxidative fragmentation of the pentose substrate in the photorespiration process. Both reactions occur simultaneously and in competition at the same active site. The polypeptide is Ribulose bisphosphate carboxylase large chain (Ephedra tweediana (Vining horsetail)).